A 315-amino-acid chain; its full sequence is MTIVHRRLALAIGDPHGIGPEIALKALRQLSANERSLIKVYGPWSALEQAAQICQMESLLQDLIHEEAGSLAQPAQWGEITPQAGLSTVQSATAAIRACENGEVDAVIACPHHETAIHRAGIAFSGYPSLLANVLGMNEDQVFLMLVGAGLRIVHVTLHESVRSALERLSPQLVVNAVQAAVQTCTLLGVPKPQVAVFGINPHASEGQLFGLEDSQITAPAVETLRKCGLAVDGPMGADMVLAQRKHDLYVAMLHDQGHIPIKLLAPNGASALSIGGRVVLSSVGHGSAMDIAGRGVADSTALLRTIALLGAQPG.

Positions 159, 203, and 255 each coordinate a divalent metal cation.

The protein belongs to the PdxA family.

It catalyses the reaction (3S,4R)-3,4-dihydroxycyclohexa-1,5-diene-1,4-dicarboxylate + NAD(+) = 3,4-dihydroxybenzoate + CO2 + NADH. Functionally, involved in the degradation of terephthalate (TPA) via the protocatechuate (PCA) 4,5-cleavage pathway. Catalyzes the dehydrogenation of 1,2-dihydroxy-3,5-cyclohexadiene-1,4-dicarboxylate (DCD) to yield protocatechuate (PCA). The polypeptide is 1,2-dihydroxy-3,5-cyclohexadiene-1,4-dicarboxylate dehydrogenase (tphBI) (Comamonas sp).